A 147-amino-acid polypeptide reads, in one-letter code: Sec-independent protein translocase protein TatB (147 aa).

A helical transmembrane segment spans residues 2–22 (FSSIGWPEIFTVLILGLIIIG). Residues 96–147 (FDPKKIMASGTEGEAYRERGINPQPAGDSASPQTPSNKESQPKAGFSWDDIT) form a disordered region. Positions 125–134 (ASPQTPSNKE) are enriched in polar residues.

Belongs to the TatB family. In terms of assembly, the Tat system comprises two distinct complexes: a TatABC complex, containing multiple copies of TatA, TatB and TatC subunits, and a separate TatA complex, containing only TatA subunits. Substrates initially bind to the TatABC complex, which probably triggers association of the separate TatA complex to form the active translocon.

It is found in the cell membrane. In terms of biological role, part of the twin-arginine translocation (Tat) system that transports large folded proteins containing a characteristic twin-arginine motif in their signal peptide across membranes. Together with TatC, TatB is part of a receptor directly interacting with Tat signal peptides. TatB may form an oligomeric binding site that transiently accommodates folded Tat precursor proteins before their translocation. This chain is Sec-independent protein translocase protein TatB, found in Corynebacterium diphtheriae (strain ATCC 700971 / NCTC 13129 / Biotype gravis).